A 254-amino-acid polypeptide reads, in one-letter code: Probable WRKY transcription factor 67 (254 aa).

The segment at residues 102–170 (SRTMCPNDGF…YLGKHVCKAF (69 aa)) is a DNA-binding region (WRKY).

This sequence belongs to the WRKY group III family.

Its subcellular location is the nucleus. Transcription factor. Interacts specifically with the W box (5'-(T)TGAC[CT]-3'), a frequently occurring elicitor-responsive cis-acting element. The protein is Probable WRKY transcription factor 67 (WRKY67) of Arabidopsis thaliana (Mouse-ear cress).